The sequence spans 354 residues: Peptide chain release factor 1 (354 aa).

The residue at position 232 (Gln-232) is an N5-methylglutamine.

Belongs to the prokaryotic/mitochondrial release factor family. In terms of processing, methylated by PrmC. Methylation increases the termination efficiency of RF1.

It is found in the cytoplasm. Its function is as follows. Peptide chain release factor 1 directs the termination of translation in response to the peptide chain termination codons UAG and UAA. This Jannaschia sp. (strain CCS1) protein is Peptide chain release factor 1.